Here is a 299-residue protein sequence, read N- to C-terminus: Phosphoribosylaminoimidazole-succinocarboxamide synthase (299 aa).

This sequence belongs to the SAICAR synthetase family.

It carries out the reaction 5-amino-1-(5-phospho-D-ribosyl)imidazole-4-carboxylate + L-aspartate + ATP = (2S)-2-[5-amino-1-(5-phospho-beta-D-ribosyl)imidazole-4-carboxamido]succinate + ADP + phosphate + 2 H(+). It functions in the pathway purine metabolism; IMP biosynthesis via de novo pathway; 5-amino-1-(5-phospho-D-ribosyl)imidazole-4-carboxamide from 5-amino-1-(5-phospho-D-ribosyl)imidazole-4-carboxylate: step 1/2. The chain is Phosphoribosylaminoimidazole-succinocarboxamide synthase from Streptomyces coelicolor (strain ATCC BAA-471 / A3(2) / M145).